The primary structure comprises 205 residues: Outer-membrane lipoprotein LolB (205 aa).

An N-terminal signal peptide occupies residues 1–17 (MRLRLFLAASALALLSG). A lipid anchor (N-palmitoyl cysteine) is attached at C18. A lipid anchor (S-diacylglycerol cysteine) is attached at C18.

The protein belongs to the LolB family. As to quaternary structure, monomer.

The protein localises to the cell outer membrane. Its function is as follows. Plays a critical role in the incorporation of lipoproteins in the outer membrane after they are released by the LolA protein. This Pseudomonas paraeruginosa (strain DSM 24068 / PA7) (Pseudomonas aeruginosa (strain PA7)) protein is Outer-membrane lipoprotein LolB.